The chain runs to 398 residues: NADH-quinone oxidoreductase subunit D (398 aa).

Belongs to the complex I 49 kDa subunit family. As to quaternary structure, NDH-1 is composed of 14 different subunits. Subunits NuoB, C, D, E, F, and G constitute the peripheral sector of the complex.

The protein localises to the cell inner membrane. The catalysed reaction is a quinone + NADH + 5 H(+)(in) = a quinol + NAD(+) + 4 H(+)(out). Its function is as follows. NDH-1 shuttles electrons from NADH, via FMN and iron-sulfur (Fe-S) centers, to quinones in the respiratory chain. The immediate electron acceptor for the enzyme in this species is believed to be ubiquinone. Couples the redox reaction to proton translocation (for every two electrons transferred, four hydrogen ions are translocated across the cytoplasmic membrane), and thus conserves the redox energy in a proton gradient. The polypeptide is NADH-quinone oxidoreductase subunit D (Caulobacter vibrioides (strain ATCC 19089 / CIP 103742 / CB 15) (Caulobacter crescentus)).